The following is a 460-amino-acid chain: Tyrosine phenol-lyase (460 aa).

Lys-260 is modified (N6-(pyridoxal phosphate)lysine).

This sequence belongs to the beta-eliminating lyase family. Homotetramer. Requires pyridoxal 5'-phosphate as cofactor.

It carries out the reaction L-tyrosine + H2O = phenol + pyruvate + NH4(+). The chain is Tyrosine phenol-lyase from Fusobacterium nucleatum subsp. nucleatum (strain ATCC 25586 / DSM 15643 / BCRC 10681 / CIP 101130 / JCM 8532 / KCTC 2640 / LMG 13131 / VPI 4355).